The primary structure comprises 336 residues: Holliday junction branch migration complex subunit RuvB (336 aa).

Positions 1–182 (MKERIVNLET…FGMSFRMQFY (182 aa)) are large ATPase domain (RuvB-L). ATP-binding positions include leucine 21, arginine 22, glycine 63, lysine 66, threonine 67, serine 68, 129 to 131 (EDF), arginine 172, tyrosine 182, and arginine 219. Threonine 67 serves as a coordination point for Mg(2+). Positions 183–253 (SPSELSLIIK…ITLHALNELG (71 aa)) are small ATPAse domain (RuvB-S). The segment at 256 to 336 (ELGFDEADLA…IPTLNPQTLF (81 aa)) is head domain (RuvB-H). Positions 310 and 315 each coordinate DNA.

This sequence belongs to the RuvB family. As to quaternary structure, homohexamer. Forms an RuvA(8)-RuvB(12)-Holliday junction (HJ) complex. HJ DNA is sandwiched between 2 RuvA tetramers; dsDNA enters through RuvA and exits via RuvB. An RuvB hexamer assembles on each DNA strand where it exits the tetramer. Each RuvB hexamer is contacted by two RuvA subunits (via domain III) on 2 adjacent RuvB subunits; this complex drives branch migration. In the full resolvosome a probable DNA-RuvA(4)-RuvB(12)-RuvC(2) complex forms which resolves the HJ.

The protein resides in the cytoplasm. The catalysed reaction is ATP + H2O = ADP + phosphate + H(+). Functionally, the RuvA-RuvB-RuvC complex processes Holliday junction (HJ) DNA during genetic recombination and DNA repair, while the RuvA-RuvB complex plays an important role in the rescue of blocked DNA replication forks via replication fork reversal (RFR). RuvA specifically binds to HJ cruciform DNA, conferring on it an open structure. The RuvB hexamer acts as an ATP-dependent pump, pulling dsDNA into and through the RuvAB complex. RuvB forms 2 homohexamers on either side of HJ DNA bound by 1 or 2 RuvA tetramers; 4 subunits per hexamer contact DNA at a time. Coordinated motions by a converter formed by DNA-disengaged RuvB subunits stimulates ATP hydrolysis and nucleotide exchange. Immobilization of the converter enables RuvB to convert the ATP-contained energy into a lever motion, pulling 2 nucleotides of DNA out of the RuvA tetramer per ATP hydrolyzed, thus driving DNA branch migration. The RuvB motors rotate together with the DNA substrate, which together with the progressing nucleotide cycle form the mechanistic basis for DNA recombination by continuous HJ branch migration. Branch migration allows RuvC to scan DNA until it finds its consensus sequence, where it cleaves and resolves cruciform DNA. In Helicobacter pylori (strain J99 / ATCC 700824) (Campylobacter pylori J99), this protein is Holliday junction branch migration complex subunit RuvB.